Here is a 375-residue protein sequence, read N- to C-terminus: Aminomethyltransferase (375 aa).

This sequence belongs to the GcvT family. The glycine cleavage system is composed of four proteins: P, T, L and H.

The catalysed reaction is N(6)-[(R)-S(8)-aminomethyldihydrolipoyl]-L-lysyl-[protein] + (6S)-5,6,7,8-tetrahydrofolate = N(6)-[(R)-dihydrolipoyl]-L-lysyl-[protein] + (6R)-5,10-methylene-5,6,7,8-tetrahydrofolate + NH4(+). Functionally, the glycine cleavage system catalyzes the degradation of glycine. This chain is Aminomethyltransferase, found in Cupriavidus metallidurans (strain ATCC 43123 / DSM 2839 / NBRC 102507 / CH34) (Ralstonia metallidurans).